Consider the following 341-residue polypeptide: GDP-mannose transporter GONST5 (341 aa).

8 helical membrane-spanning segments follow: residues 17-37 (LSILQWWGFNVTVIIMNKWIF), 44-64 (FPLSVSCVHFICSSIGAYIVI), 89-109 (FVFCINIVLGNISLRYIPVSF), 141-161 (LVPIVGGILLTSITELSFNVF), 192-212 (INTVYYMAPFATMILGLPAFL), 233-253 (IILFNSGVLAFCLNFSIFYVI), 260-280 (TFNVAGNLKVAVAVFVSWMIF), and 284-304 (ISPMNAVGCGITLVGCTFYGY). The region spanning 33–152 (NKWIFQKLDF…PIVGGILLTS (120 aa)) is the EamA domain.

This sequence belongs to the TPT transporter family. TPT (TC 2.A.7.9) subfamily. As to expression, expressed in rosette leaves, flowers and siliques.

Its subcellular location is the golgi apparatus membrane. GDP-mannose transporter that may be involved in the import of GDP-mannose from the cytoplasm into the Golgi lumen. The polypeptide is GDP-mannose transporter GONST5 (GONST5) (Arabidopsis thaliana (Mouse-ear cress)).